Consider the following 334-residue polypeptide: Spermidine synthase 1 (334 aa).

The tract at residues 1-37 is disordered; it reads MAAPENTLHSTDSPLKRQREDEVNGVSDTLSKEPQPN. The span at 26-37 shows a compositional bias: polar residues; it reads VSDTLSKEPQPN. In terms of domain architecture, PABS spans 44 to 281; that stretch reads PGWFSEISPM…GMIGFMLCST (238 aa). Gln75 contacts S-adenosyl 3-(methylsulfanyl)propylamine. Tyr105 is a binding site for putrescine. S-adenosyl 3-(methylsulfanyl)propylamine contacts are provided by residues Gln106, Asp130, Glu150, 181 to 182, and Asp200; that span reads DG. Asp200 serves as the catalytic Proton acceptor. Putrescine contacts are provided by residues 200–203 and Tyr269; that span reads DSSD.

Belongs to the spermidine/spermine synthase family.

The catalysed reaction is S-adenosyl 3-(methylsulfanyl)propylamine + putrescine = S-methyl-5'-thioadenosine + spermidine + H(+). The protein operates within amine and polyamine biosynthesis; spermidine biosynthesis; spermidine from putrescine: step 1/1. This is Spermidine synthase 1 (SPDSYN1) from Pisum sativum (Garden pea).